The sequence spans 276 residues: D-aminoacyl-tRNA deacylase (276 aa).

It belongs to the DtdA deacylase family. As to quaternary structure, monomer. Zn(2+) serves as cofactor.

The enzyme catalyses a D-aminoacyl-tRNA + H2O = a tRNA + a D-alpha-amino acid + H(+). The catalysed reaction is glycyl-tRNA(Ala) + H2O = tRNA(Ala) + glycine + H(+). Functionally, D-aminoacyl-tRNA deacylase with broad substrate specificity. By recycling D-aminoacyl-tRNA to D-amino acids and free tRNA molecules, this enzyme counteracts the toxicity associated with the formation of D-aminoacyl-tRNA entities in vivo. The polypeptide is D-aminoacyl-tRNA deacylase (Korarchaeum cryptofilum (strain OPF8)).